The sequence spans 309 residues: MAGNSRRRGAVRKAGTKKGPTVGSGGQRRRGLEGRGPTPPAHLRPNHPAAKRAQSPPRRPAKRTEETETVLGRNPVLECLRAGVPATALYVALGTEADERLTESVSRAADSGISILEVPRADLDRMTGNHLHQGIALQVPPYIYAHPDDLLEAAAGSLPALLVALDNISDPRNLGAIVRSVAAFGGHGVLIPQRRSASVTAVAWRTSAGAAARIPVARATNLTRTLQDWADRGLRVIGLDAGGDTMLDDLDGSDPLVVVVGSEGKGLSRLVRQNCDEVVSIPMAGSAESLNASVAAGVVLAEISRQRRG.

Over residues Met-1–Thr-16 the composition is skewed to basic residues. The segment at Met-1–Val-70 is disordered. The S-adenosyl-L-methionine site is built by Gly-261, Ile-281, and Leu-290.

This sequence belongs to the class IV-like SAM-binding methyltransferase superfamily. RNA methyltransferase TrmH family.

This is an uncharacterized protein from Mycolicibacterium paratuberculosis (strain ATCC BAA-968 / K-10) (Mycobacterium paratuberculosis).